An 861-amino-acid polypeptide reads, in one-letter code: Translation initiation factor IF-2 (861 aa).

2 disordered regions span residues M1–A69 and A92–K273. Positions G53–G65 are enriched in gly residues. Residues A94–D108 are compositionally biased toward basic and acidic residues. Low complexity predominate over residues A109–Q120. Composition is skewed to basic and acidic residues over residues R121–A155 and D163–P186. Residues P213–R223 are compositionally biased toward low complexity. Residues R255–K273 show a composition bias toward basic and acidic residues. The tr-type G domain maps to P357–K527. The G1 stretch occupies residues G366–T373. G366–T373 is a binding site for GTP. A G2 region spans residues G391 to H395. The G3 stretch occupies residues D413–G416. GTP is bound by residues D413–H417 and N467–D470. The interval N467–D470 is G4. The tract at residues S503–K505 is G5.

It belongs to the TRAFAC class translation factor GTPase superfamily. Classic translation factor GTPase family. IF-2 subfamily.

It is found in the cytoplasm. Its function is as follows. One of the essential components for the initiation of protein synthesis. Protects formylmethionyl-tRNA from spontaneous hydrolysis and promotes its binding to the 30S ribosomal subunits. Also involved in the hydrolysis of GTP during the formation of the 70S ribosomal complex. The chain is Translation initiation factor IF-2 from Maricaulis maris (strain MCS10) (Caulobacter maris).